The primary structure comprises 408 residues: Glutaryl-CoA dehydrogenase, mitochondrial (408 aa).

The transit peptide at 1-13 (KGGKTQGRSAKSS) directs the protein to the mitochondrion. Residues 107-108 (RS) and S156 contribute to the substrate site. Residues 147–156 (FGLTEPNHGS), S156, and 182–184 (WIT) contribute to the FAD site. K210 is subject to N6-acetyllysine. A substrate-binding site is contributed by 257–264 (FGCLNNAR). Residues R289, Q300, and 357-361 (DMLGG) contribute to the FAD site. The active-site Proton acceptor is E384. Residue G385 participates in substrate binding. FAD contacts are provided by residues T386, 386 to 388 (THD), and F404.

This sequence belongs to the acyl-CoA dehydrogenase family. In terms of assembly, homotetramer. The cofactor is FAD.

It localises to the mitochondrion matrix. The catalysed reaction is glutaryl-CoA + oxidized [electron-transfer flavoprotein] + 2 H(+) = (2E)-butenoyl-CoA + reduced [electron-transfer flavoprotein] + CO2. The protein operates within amino-acid metabolism; lysine degradation. It participates in amino-acid metabolism; tryptophan metabolism. Catalyzes the oxidative decarboxylation of glutaryl-CoA to crotonyl-CoA and CO(2) in the degradative pathway of L-lysine, L-hydroxylysine, and L-tryptophan metabolism. It uses electron transfer flavoprotein as its electron acceptor. This chain is Glutaryl-CoA dehydrogenase, mitochondrial (GCDH), found in Sus scrofa (Pig).